A 394-amino-acid polypeptide reads, in one-letter code: Elongation factor Tu 2 (394 aa).

Positions 10 to 204 constitute a tr-type G domain; that stretch reads KPHVNVGTIG…FLDSYIPEPE (195 aa). The tract at residues 19–26 is G1; the sequence is GHVDHGKT. A GTP-binding site is contributed by 19-26; sequence GHVDHGKT. Position 26 (threonine 26) interacts with Mg(2+). The G2 stretch occupies residues 60–64; sequence GITIN. The tract at residues 81–84 is G3; the sequence is DCPG. GTP-binding positions include 81–85 and 136–139; these read DCPGH and NKCD. Positions 136 to 139 are G4; sequence NKCD. The G5 stretch occupies residues 174 to 176; sequence SAL.

Belongs to the TRAFAC class translation factor GTPase superfamily. Classic translation factor GTPase family. EF-Tu/EF-1A subfamily. In terms of assembly, monomer.

Its subcellular location is the cytoplasm. It catalyses the reaction GTP + H2O = GDP + phosphate + H(+). Its function is as follows. GTP hydrolase that promotes the GTP-dependent binding of aminoacyl-tRNA to the A-site of ribosomes during protein biosynthesis. The polypeptide is Elongation factor Tu 2 (Shigella flexneri serotype 5b (strain 8401)).